A 2116-amino-acid chain; its full sequence is MSGFRLGDHVWLEPPSTHKTGVAIGGIIKEAKPGKVLVEDDEGKEHWIRAEDFGVLSPMHPNSVQGVDDMIRLGDLNEAGMVHNLLIRYQQHKIYTYTGSILVAVNPFQVLPLYTLEQVQLYYSRHMGELPPHVFAIANNCYFSMKRNKRDQCCIISGESGAGKTETTKLILQFLATISGQHSWIEQQVLEANPILEAFGNAKTIRNDNSSRFGKYIDIYFNPSGVIEGARIEQFLLEKSRVCRQAPEERNYHIFYCMLMGVSAEDKQLLSLGTPSEYHYLTMGNCTSCEGLNDAKDYAHIRSAMKILQFSDSESWDVIKLLAAILHLGNVGFMASVFENLDASDVMETPAFPTVMKLLEVQHQELRDCLIKHTILIRGEFVTRSLNIAQAADRRDAFVKGIYGHLFLWIVKKINAAIFTPPAQDPKNVRRAIGLLDIFGFENFENNSFEQLCINFANEHLQQFFVQHVFTMEQEEYRSENISWDYIHYTDNRPTLDLLALKPMSIISLLDEESRFPQGTDLTMLQKLNSVHANNKAFLQPKNIHDARFGIAHFAGEVYYQAEGFLEKNRDVLSTDILTLVYSSKNKFLREIFNLELAETKLGHGTIRQAKAGNHLFKSADSNKRPSTLGSQFKQSLDQLMKILTNCQPYFIRCIKPNEYKKPLLFDRELCLRQLRYSGMMETVHIRKSGFPIRYTFEEFSQRFGVLLPNAMRMQLQGKLRQMTLGITDVWLRTDKDWKAGKTKIFLRDHQDTLLEVQRSQVLDRAALSIQKVLRGYRYRKEFLRQRRAAVTLQAWWRGYCNRRNFKLILVGFERLQAIARSQPLARQYQAMRQRTVQLQALCRGYLVRQQVQAKRRAVVVIQAHARGMAARRNFQQRKANAPLVIPAEGQKSQGALPAKKRRSIYDTVTDTEMVEKVFGFLPAMIGGQEGQASPHFEDLESKTQKLLEVDLDTVPMAEEPEEDVDGLAEYTFPKFAVTYFQKSASHTHIRRPLRYPLLYHEDDTDCLAALVIWNVILRFMGDLPEPVLYARSSQQGSSVMRQIHDTLGREHGAQVPQHSRSAQVASQLNIGEEALEPDGLGADRPMSNLEKVHFIVGYAILRPSLRDEIYCQICKQLSENFKTSSLARGWILLSLCLGCFPPSERFMKYLLNFIGQGPATYGPFCAERLRRTYANGVRAEPPTWLELQAVKSKKHIPIQVILATGESLTVPVDSASTSREMCMHIAHKQGLSDHLGFSLQVAVYDKFWSLGSGRDHMMDAIARCEQMAQERGESQRQSPWRIYFRKEFFTPWHDSREDPVSTELIYRQVLRGVWSGEYSFEKEEELVELLARHCYVQLGASAESKAVQELLPSCIPHKLYRTKPPDRWASLVTAACAKAPYTQKQVTPLAVREQVVDAARLQWPLLFSRLFEVITLSGPRLPKTQLILAVNWKGLCFLDQQEKMLLELSFPEVMGLATNREAQGGQRLLLSTMHEEYEFVSPSSVAIAELVALFLEGLKERSIFAMALQDRKATDDTTLLAFKKGDLLVLTKKQGLLASENWTLGQNDRTGKTGLVPMACLYTIPTVTKPSAQLLSLLAMSPEKRKLAAQEGQFTEPRPEEPPKEKLHTLEEFSYEFFRAPEKDMVSMAVLPLARARGHLWAYSCEPLRQPLLKRVHANVDLWDIACQIFVAILRYMGDYPSRQAWPTLELTDQIFTLALQHPALQDEVYCQILKQLTHNSNRHSEERGWQLLWLCTGLFPPSKGLLPHAQKFIDTRRGKLLAPDCSRRIQKVLRTGPRKQPPHQVEVEAAEQNVSRICHKIYFPNDTSEMLEVVANTRVRDVCDSIATRLQLASWEGCSLFIKISDKVISQKEGDFFFDSLREVSDWVKKNKPQKEGAPVTLPYQVYFMRKLWLNISPGKDVNADTILHYHQELPKYLRGFHKCSREDAIHLAGLIYKAQFNNDRSQLASVPKILRELVPENLTRLMSSEEWKKSILLAYDKHKDKTVEEAKVAFLKWICRWPTFGSAFFEVKQTSEPSYPDVILIAINRHGVLLIHPKTKDLLTTYPFTKISSWSSGSTYFHMALGSLGRGSRLLCETSLGYKMDDLLTSYVQQLLSAMNKQRGSKAPALAST.

The 696-residue stretch at 65-760 (QGVDDMIRLG…QDTLLEVQRS (696 aa)) folds into the Myosin motor domain. Residue 158 to 165 (GESGAGKT) coordinates ATP. An actin-binding region spans residues 637 to 659 (LDQLMKILTNCQPYFIRCIKPNE). 6 IQ domains span residues 745–765 (IFLR…VLDR), 763–792 (LDRA…AAVT), 786–815 (QRRA…GFER), 814–834 (ERLQ…AMRQ), 832–861 (MRQR…AVVV), and 855–884 (KRRA…NAPL). Ser-904 is modified (phosphoserine). Residues 916 to 1542 (EKVFGFLPAM…KKQGLLASEN (627 aa)) form a mediates interaction with ANKS4B region. The region spanning 989–1192 (HIRRPLRYPL…PTWLELQAVK (204 aa)) is the MyTH4 1 domain. The 310-residue stretch at 1197-1506 (IPIQVILATG…EGLKERSIFA (310 aa)) folds into the FERM 1 domain. Ser-1371 is modified (phosphoserine). The SH3 domain maps to 1501-1567 (ERSIFAMALQ…PMACLYTIPT (67 aa)). Positions 1501–2116 (ERSIFAMALQ…GSKAPALAST (616 aa)) are mediates interaction with CDHR2, CDHR5 and USH1C. MyTH4 domains lie at 1644-1793 (YSCE…EAAE) and 1790-1896 (EAAE…KLWL). The residue at position 1645 (Ser-1645) is a Phosphoserine. The region spanning 1799–2102 (ICHKIYFPND…SYVQQLLSAM (304 aa)) is the FERM 2 domain.

Belongs to the TRAFAC class myosin-kinesin ATPase superfamily. Myosin family. As to quaternary structure, part of the IMAC/intermicrovillar adhesion complex/intermicrovillar tip-link complex composed of ANKS4B, MYO7B, USH1C, CDHR2 and CDHR5. Interacts with CDHR2. Interacts with CDHR5. Interacts with USH1C. Interacts with ANKS4B; requires initial interaction with USH1C. Interacts with CALML4; the interaction mediates the association of CALML4 with the IMAC/intermicrovillar adhesion complex.

The protein localises to the cytoplasm. It localises to the cytoskeleton. Its subcellular location is the cell projection. The protein resides in the microvillus. Myosins are actin-based motor molecules with ATPase activity. Their highly divergent tails are presumed to bind to membranous compartments, which would be moved relative to actin filaments. As part of the intermicrovillar adhesion complex/IMAC plays a role in epithelial brush border differentiation, controlling microvilli organization and length. May link the complex to the actin core bundle of microvilli. This chain is Unconventional myosin-VIIb, found in Homo sapiens (Human).